Here is a 131-residue protein sequence, read N- to C-terminus: Small ribosomal subunit protein uS8 (131 aa).

It belongs to the universal ribosomal protein uS8 family. As to quaternary structure, part of the 30S ribosomal subunit. Contacts proteins S5 and S12.

Functionally, one of the primary rRNA binding proteins, it binds directly to 16S rRNA central domain where it helps coordinate assembly of the platform of the 30S subunit. The sequence is that of Small ribosomal subunit protein uS8 from Chlorobaculum tepidum (strain ATCC 49652 / DSM 12025 / NBRC 103806 / TLS) (Chlorobium tepidum).